Reading from the N-terminus, the 198-residue chain is Molybdopterin synthase catalytic subunit (198 aa).

Substrate contacts are provided by residues 107–108 (HR), K123, and 130–132 (KKE).

The protein belongs to the MoaE family. MOCS2B subfamily. As to quaternary structure, heterotetramer; composed of 2 small (MOCS2A) and 2 large (MOCS2B) subunits.

The protein resides in the cytoplasm. The catalysed reaction is 2 [molybdopterin-synthase sulfur-carrier protein]-C-terminal-Gly-aminoethanethioate + cyclic pyranopterin phosphate + H2O = molybdopterin + 2 [molybdopterin-synthase sulfur-carrier protein]-C-terminal Gly-Gly + 2 H(+). Its pathway is cofactor biosynthesis; molybdopterin biosynthesis. Functionally, catalytic subunit of the molybdopterin synthase complex, a complex that catalyzes the conversion of precursor Z into molybdopterin. Acts by mediating the incorporation of 2 sulfur atoms from thiocarboxylated MOCS2A into precursor Z to generate a dithiolene group. This chain is Molybdopterin synthase catalytic subunit, found in Arabidopsis thaliana (Mouse-ear cress).